The sequence spans 439 residues: Argininosuccinate lyase (439 aa).

The protein belongs to the lyase 1 family. Argininosuccinate lyase subfamily.

Its subcellular location is the cytoplasm. It carries out the reaction 2-(N(omega)-L-arginino)succinate = fumarate + L-arginine. Its pathway is amino-acid biosynthesis; L-arginine biosynthesis; L-arginine from L-ornithine and carbamoyl phosphate: step 3/3. This is Argininosuccinate lyase from Caldanaerobacter subterraneus subsp. tengcongensis (strain DSM 15242 / JCM 11007 / NBRC 100824 / MB4) (Thermoanaerobacter tengcongensis).